Here is a 416-residue protein sequence, read N- to C-terminus: uncharacterized protein (416 aa).

Residues Cys-63, Cys-75, Cys-78, and Cys-152 each coordinate [4Fe-4S] cluster. Gln-253, Phe-280, Glu-300, and Asp-348 together coordinate S-adenosyl-L-methionine. Cys-374 (nucleophile) is an active-site residue.

The protein belongs to the class I-like SAM-binding methyltransferase superfamily. RNA M5U methyltransferase family.

This is an uncharacterized protein from Agrobacterium fabrum (strain C58 / ATCC 33970) (Agrobacterium tumefaciens (strain C58)).